Here is a 359-residue protein sequence, read N- to C-terminus: NAC domain-containing protein 45 (359 aa).

The NAC domain maps to 19-185 (LPPGFRFHPT…EWVVCKVFHK (167 aa)). The DNA-binding element occupies 130 to 191 (VGMKKTLVFY…VFHKKGDDRE (62 aa)).

Expressed in roots. Expressed at low levels in leaves, stems and panicles.

The protein localises to the nucleus. In terms of biological role, transcription activator involved in responses to drought stress and salt stress. Transactivates the stress response genes LEA19 and PM19L. The chain is NAC domain-containing protein 45 from Oryza sativa subsp. japonica (Rice).